The following is a 524-amino-acid chain: 56 kDa type-specific antigen (524 aa).

An N-terminal signal peptide occupies residues 1–22 (MKKIMLIASAMSALSLPFSASA). The helical transmembrane segment at 67–87 (LTTGLPFGGTLAAGMTIAPGF) threads the bilayer. Disordered regions lie at residues 112–132 (SKGEIKADSGGGTDTPIRKRF) and 387–422 (EKLAAQQEEDAKNQGEGDCKQQQGASEKSKEGKGKE). Composition is skewed to basic and acidic residues over residues 395–405 (EDAKNQGEGDC) and 413–422 (EKSKEGKGKE). The helical transmembrane segment at 472 to 492 (TGMVASGALGVAINAAEGVYV) threads the bilayer.

Its subcellular location is the cell membrane. May be an adherent factor for rickettsial adsorption to the host-cell surface and a determinant of virulence of individual rickettsial strain. It is the major outer membrane protein. The polypeptide is 56 kDa type-specific antigen (Orientia tsutsugamushi (Rickettsia tsutsugamushi)).